Consider the following 378-residue polypeptide: Chaperone protein DnaJ (378 aa).

The 65-residue stretch at aspartate 5–glycine 69 folds into the J domain. A CR-type zinc finger spans residues glycine 135–asparagine 217. The Zn(2+) site is built by cysteine 148, cysteine 151, cysteine 165, cysteine 168, cysteine 191, cysteine 194, cysteine 205, and cysteine 208. 4 CXXCXGXG motif repeats span residues cysteine 148–glycine 155, cysteine 165–glycine 172, cysteine 191–glycine 198, and cysteine 205–glycine 212.

This sequence belongs to the DnaJ family. As to quaternary structure, homodimer. Zn(2+) serves as cofactor.

It localises to the cytoplasm. Participates actively in the response to hyperosmotic and heat shock by preventing the aggregation of stress-denatured proteins and by disaggregating proteins, also in an autonomous, DnaK-independent fashion. Unfolded proteins bind initially to DnaJ; upon interaction with the DnaJ-bound protein, DnaK hydrolyzes its bound ATP, resulting in the formation of a stable complex. GrpE releases ADP from DnaK; ATP binding to DnaK triggers the release of the substrate protein, thus completing the reaction cycle. Several rounds of ATP-dependent interactions between DnaJ, DnaK and GrpE are required for fully efficient folding. Also involved, together with DnaK and GrpE, in the DNA replication of plasmids through activation of initiation proteins. The sequence is that of Chaperone protein DnaJ from Staphylococcus saprophyticus subsp. saprophyticus (strain ATCC 15305 / DSM 20229 / NCIMB 8711 / NCTC 7292 / S-41).